We begin with the raw amino-acid sequence, 85 residues long: Arminin 524 (85 aa).

An N-terminal signal peptide occupies residues 1-18 (MKAVFAILFLAFIALTYA). The propeptide occupies 19 to 57 (KSYDEVKEEIKNEVEREIFEDLEEESDELDNDVEEFNDA). The residue at position 82 (Ala82) is an Alanine amide.

It belongs to the arminin family. In terms of tissue distribution, expressed in entodermal epithelium along the body column.

Its subcellular location is the secreted. It is found in the target cell membrane. Antimicrobial peptide with a broad-spectrum antimicrobial activity. Keeps its antibacterial activity under a wide range of salt concentrations that mimic physiological conditions of human blood, which is surprising, since Hydra is an obligate freshwater animal with nearly no salt tolerance. Does not affect red blood cells. This is Arminin 524 from Hydra oligactis (Brown hydra).